A 197-amino-acid chain; its full sequence is Ribonuclease HII (197 aa).

The RNase H type-2 domain maps to Gln3–Gly192. A divalent metal cation is bound by residues Asp9, Glu10, and Asp101.

It belongs to the RNase HII family. Mn(2+) is required as a cofactor. Requires Mg(2+) as cofactor.

The protein localises to the cytoplasm. It carries out the reaction Endonucleolytic cleavage to 5'-phosphomonoester.. Endonuclease that specifically degrades the RNA of RNA-DNA hybrids. This chain is Ribonuclease HII, found in Pseudoalteromonas atlantica (strain T6c / ATCC BAA-1087).